The sequence spans 336 residues: Dihydroorotate dehydrogenase (quinone) (336 aa).

FMN-binding positions include 62–66 and threonine 86; that span reads AGMDK. Lysine 66 serves as a coordination point for substrate. Substrate is bound at residue 111–115; it reads NRMGF. Residues asparagine 139 and asparagine 172 each contribute to the FMN site. Asparagine 172 provides a ligand contact to substrate. The active-site Nucleophile is the serine 175. Asparagine 177 contacts substrate. FMN is bound by residues lysine 217 and threonine 245. Residue 246–247 participates in substrate binding; that stretch reads NT. FMN-binding positions include glycine 268, glycine 297, and 318-319; that span reads YS.

The protein belongs to the dihydroorotate dehydrogenase family. Type 2 subfamily. As to quaternary structure, monomer. FMN serves as cofactor.

Its subcellular location is the cell membrane. The enzyme catalyses (S)-dihydroorotate + a quinone = orotate + a quinol. Its pathway is pyrimidine metabolism; UMP biosynthesis via de novo pathway; orotate from (S)-dihydroorotate (quinone route): step 1/1. Its function is as follows. Catalyzes the conversion of dihydroorotate to orotate with quinone as electron acceptor. The chain is Dihydroorotate dehydrogenase (quinone) from Buchnera aphidicola subsp. Schizaphis graminum (strain Sg).